A 461-amino-acid chain; its full sequence is CUGBP Elav-like family member 3 (461 aa).

RRM domains lie at 7 to 88 (IKLF…PADS) and 95 to 175 (RKLF…FADT). Residues 345 to 358 (PPALVAQQPPPPPQ) are compositionally biased toward pro residues. A disordered region spans residues 345–375 (PPALVAQQPPPPPQQQQQQQQQQQQREGPDG). Low complexity predominate over residues 359-369 (QQQQQQQQQQQ). The 79-residue stretch at 376–454 (CNIFIYHLPQ…KRLKVQLKRP (79 aa)) folds into the RRM 3 domain.

This sequence belongs to the CELF/BRUNOL family.

Its subcellular location is the nucleus. It is found in the cytoplasm. RNA-binding protein involved in the regulation of pre-mRNA alternative splicing. Mediates exon inclusion and/or exclusion in pre-mRNA that are subject to tissue-specific and developmentally regulated alternative splicing. Specifically activates exon 5 inclusion of cardiac isoforms of TNNT2 during heart remodeling at the juvenile to adult transition. Activates the splicing of MAPT/Tau exon 10. Binds to muscle-specific splicing enhancer (MSE) intronic sites flanking the alternative exon 5 of TNNT2 pre-mRNA. This is CUGBP Elav-like family member 3 (CELF3) from Bos taurus (Bovine).